The following is a 306-amino-acid chain: Pantothenate kinase (306 aa).

Residue 90 to 97 (GSVAVGKS) coordinates ATP.

It belongs to the prokaryotic pantothenate kinase family.

Its subcellular location is the cytoplasm. It carries out the reaction (R)-pantothenate + ATP = (R)-4'-phosphopantothenate + ADP + H(+). It participates in cofactor biosynthesis; coenzyme A biosynthesis; CoA from (R)-pantothenate: step 1/5. This Listeria welshimeri serovar 6b (strain ATCC 35897 / DSM 20650 / CCUG 15529 / CIP 8149 / NCTC 11857 / SLCC 5334 / V8) protein is Pantothenate kinase.